A 734-amino-acid polypeptide reads, in one-letter code: Photosystem I P700 chlorophyll a apoprotein A2 (734 aa).

8 helical membrane passes run 46–69, 135–158, 175–199, 273–291, 330–353, 369–395, 417–439, and 517–535; these read IFAS…FHVA, LYQG…LHLQ, LNHH…HVAI, IAHH…GHQY, LHFQ…QHMY, AALY…IFFI, AIIS…LYVH, and FLVH…LILV. Residues C559 and C568 each coordinate [4Fe-4S] cluster. A run of 2 helical transmembrane segments spans residues 575–596 and 643–665; these read AFYL…YWHW and LSVW…MFLI. Residues H654, M662, and Y670 each coordinate chlorophyll a. Phylloquinone is bound at residue W671. The chain crosses the membrane as a helical span at residues 707 to 727; that stretch reads LVGLAHFSVGYIFTYAAFLIA.

Belongs to the PsaA/PsaB family. In terms of assembly, the PsaA/B heterodimer binds the P700 chlorophyll special pair and subsequent electron acceptors. PSI consists of a core antenna complex that captures photons, and an electron transfer chain that converts photonic excitation into a charge separation. The eukaryotic PSI reaction center is composed of at least 11 subunits. P700 is a chlorophyll a/chlorophyll a' dimer, A0 is one or more chlorophyll a, A1 is one or both phylloquinones and FX is a shared 4Fe-4S iron-sulfur center. serves as cofactor.

It localises to the plastid. Its subcellular location is the chloroplast thylakoid membrane. It catalyses the reaction reduced [plastocyanin] + hnu + oxidized [2Fe-2S]-[ferredoxin] = oxidized [plastocyanin] + reduced [2Fe-2S]-[ferredoxin]. In terms of biological role, psaA and PsaB bind P700, the primary electron donor of photosystem I (PSI), as well as the electron acceptors A0, A1 and FX. PSI is a plastocyanin-ferredoxin oxidoreductase, converting photonic excitation into a charge separation, which transfers an electron from the donor P700 chlorophyll pair to the spectroscopically characterized acceptors A0, A1, FX, FA and FB in turn. Oxidized P700 is reduced on the lumenal side of the thylakoid membrane by plastocyanin. This is Photosystem I P700 chlorophyll a apoprotein A2 from Chaetosphaeridium globosum (Charophycean green alga).